Consider the following 708-residue polypeptide: UvrABC system protein B (708 aa).

Residues 32-419 enclose the Helicase ATP-binding domain; it reads EGIQSGKTAQ…GGEVVEQIIR (388 aa). 45–52 is an ATP binding site; it reads GATGTGKT. The Beta-hairpin motif lies at 98–121; that stretch reads YYDYYQPEAYIPQRDVYIEKDSSI. A Helicase C-terminal domain is found at 436–598; it reads QVTHLLEQVR…IVPKTVRKSI (163 aa). Residues 627-662 form the UVR domain; sequence IEYVDKLEQEMLAAAEDLEFERAARLRDRVLQLKEH. The disordered stretch occupies residues 668–708; the sequence is SEVEIVDEKSAGKSGGRGRGRRGAKKKGASKGTKIPRPKRG. The segment covering 683-708 has biased composition (basic residues); the sequence is GRGRGRRGAKKKGASKGTKIPRPKRG.

The protein belongs to the UvrB family. As to quaternary structure, forms a heterotetramer with UvrA during the search for lesions. Interacts with UvrC in an incision complex.

Its subcellular location is the cytoplasm. In terms of biological role, the UvrABC repair system catalyzes the recognition and processing of DNA lesions. A damage recognition complex composed of 2 UvrA and 2 UvrB subunits scans DNA for abnormalities. Upon binding of the UvrA(2)B(2) complex to a putative damaged site, the DNA wraps around one UvrB monomer. DNA wrap is dependent on ATP binding by UvrB and probably causes local melting of the DNA helix, facilitating insertion of UvrB beta-hairpin between the DNA strands. Then UvrB probes one DNA strand for the presence of a lesion. If a lesion is found the UvrA subunits dissociate and the UvrB-DNA preincision complex is formed. This complex is subsequently bound by UvrC and the second UvrB is released. If no lesion is found, the DNA wraps around the other UvrB subunit that will check the other stand for damage. The protein is UvrABC system protein B of Rhodopirellula baltica (strain DSM 10527 / NCIMB 13988 / SH1).